The primary structure comprises 661 residues: Zinc finger protein 81 (661 aa).

The KRAB domain occupies 21–92 (VSFEDVTVDF…EGEAPHQSCS (72 aa)). Lysine 266 participates in a covalent cross-link: Glycyl lysine isopeptide (Lys-Gly) (interchain with G-Cter in SUMO2). C2H2-type zinc fingers lie at residues 330 to 352 (YICT…EKTH), 358 to 380 (YKCN…QTTH), 386 to 408 (FECS…QKIH), 414 to 436 (HKCS…QRIH), 442 to 464 (YICT…QRIH), 470 to 492 (YECS…KRIH), 498 to 520 (YICT…QKSH), 526 to 548 (YICA…QTIH), 554 to 576 (YVCA…QRIH), 582 to 604 (YKCP…QRIH), 610 to 632 (YICA…QTIH), and 638 to 660 (YKCS…RNIH).

Belongs to the krueppel C2H2-type zinc-finger protein family.

Its subcellular location is the nucleus. May be involved in transcriptional regulation. In Homo sapiens (Human), this protein is Zinc finger protein 81 (ZNF81).